The following is a 124-amino-acid chain: Ribosome-binding factor A (124 aa).

This sequence belongs to the RbfA family. As to quaternary structure, monomer. Binds 30S ribosomal subunits, but not 50S ribosomal subunits or 70S ribosomes.

It localises to the cytoplasm. One of several proteins that assist in the late maturation steps of the functional core of the 30S ribosomal subunit. Associates with free 30S ribosomal subunits (but not with 30S subunits that are part of 70S ribosomes or polysomes). Required for efficient processing of 16S rRNA. May interact with the 5'-terminal helix region of 16S rRNA. This chain is Ribosome-binding factor A, found in Sorangium cellulosum (strain So ce56) (Polyangium cellulosum (strain So ce56)).